The primary structure comprises 241 residues: UDP-2,3-diacylglucosamine hydrolase (241 aa).

The Mn(2+) site is built by aspartate 8, histidine 10, aspartate 41, asparagine 79, and histidine 114. 79-80 contributes to the substrate binding site; that stretch reads NR. The substrate site is built by aspartate 122, serine 160, lysine 167, and histidine 195. Mn(2+) is bound by residues histidine 195 and histidine 197.

It belongs to the LpxH family. Mn(2+) is required as a cofactor.

It is found in the cell inner membrane. The enzyme catalyses UDP-2-N,3-O-bis[(3R)-3-hydroxytetradecanoyl]-alpha-D-glucosamine + H2O = 2-N,3-O-bis[(3R)-3-hydroxytetradecanoyl]-alpha-D-glucosaminyl 1-phosphate + UMP + 2 H(+). The protein operates within glycolipid biosynthesis; lipid IV(A) biosynthesis; lipid IV(A) from (3R)-3-hydroxytetradecanoyl-[acyl-carrier-protein] and UDP-N-acetyl-alpha-D-glucosamine: step 4/6. Hydrolyzes the pyrophosphate bond of UDP-2,3-diacylglucosamine to yield 2,3-diacylglucosamine 1-phosphate (lipid X) and UMP by catalyzing the attack of water at the alpha-P atom. Involved in the biosynthesis of lipid A, a phosphorylated glycolipid that anchors the lipopolysaccharide to the outer membrane of the cell. The polypeptide is UDP-2,3-diacylglucosamine hydrolase (Azotobacter vinelandii (strain DJ / ATCC BAA-1303)).